The following is a 142-amino-acid chain: Large ribosomal subunit protein uL11 (142 aa).

This sequence belongs to the universal ribosomal protein uL11 family. As to quaternary structure, part of the ribosomal stalk of the 50S ribosomal subunit. Interacts with L10 and the large rRNA to form the base of the stalk. L10 forms an elongated spine to which L12 dimers bind in a sequential fashion forming a multimeric L10(L12)X complex. One or more lysine residues are methylated.

Its function is as follows. Forms part of the ribosomal stalk which helps the ribosome interact with GTP-bound translation factors. In Proteus vulgaris, this protein is Large ribosomal subunit protein uL11.